The primary structure comprises 537 residues: CTP synthase (537 aa).

The interval 1–267 (MTKYIFVTGG…DQIVCDHLKL (267 aa)) is amidoligase domain. S13 is a binding site for CTP. S13 provides a ligand contact to UTP. 14 to 19 (SIGKGI) contributes to the ATP binding site. Y54 lines the L-glutamine pocket. D71 is an ATP binding site. Mg(2+)-binding residues include D71 and E141. Residues 148 to 150 (DIE), 188 to 193 (KTKPTQ), and K224 each bind CTP. UTP contacts are provided by residues 188 to 193 (KTKPTQ) and K224. 240-242 (RDV) serves as a coordination point for ATP. The 244-residue stretch at 292-535 (RIALVGKYVE…VTAAVKNKNQ (244 aa)) folds into the Glutamine amidotransferase type-1 domain. G354 serves as a coordination point for L-glutamine. C381 (nucleophile; for glutamine hydrolysis) is an active-site residue. Residues 382–385 (LGMQ), E405, and R463 contribute to the L-glutamine site. Active-site residues include H508 and E510.

This sequence belongs to the CTP synthase family. As to quaternary structure, homotetramer.

The catalysed reaction is UTP + L-glutamine + ATP + H2O = CTP + L-glutamate + ADP + phosphate + 2 H(+). The enzyme catalyses L-glutamine + H2O = L-glutamate + NH4(+). It catalyses the reaction UTP + NH4(+) + ATP = CTP + ADP + phosphate + 2 H(+). Its pathway is pyrimidine metabolism; CTP biosynthesis via de novo pathway; CTP from UDP: step 2/2. Allosterically activated by GTP, when glutamine is the substrate; GTP has no effect on the reaction when ammonia is the substrate. The allosteric effector GTP functions by stabilizing the protein conformation that binds the tetrahedral intermediate(s) formed during glutamine hydrolysis. Inhibited by the product CTP, via allosteric rather than competitive inhibition. Its function is as follows. Catalyzes the ATP-dependent amination of UTP to CTP with either L-glutamine or ammonia as the source of nitrogen. Regulates intracellular CTP levels through interactions with the four ribonucleotide triphosphates. This is CTP synthase from Streptococcus equi subsp. zooepidemicus (strain H70).